The sequence spans 354 residues: NADH-quinone oxidoreductase subunit H (354 aa).

Helical transmembrane passes span 16–36 (WLAV…PVMI), 90–110 (YLFI…WAVI), 126–146 (VLYV…SGWA), 170–190 (MGFA…TGIV), 197–217 (IWNW…ISGL), 249–269 (VFFL…AIMF), 290–310 (VPGF…FLWF), and 329–349 (VLIP…YFKV).

The protein belongs to the complex I subunit 1 family. In terms of assembly, NDH-1 is composed of 14 different subunits. Subunits NuoA, H, J, K, L, M, N constitute the membrane sector of the complex.

Its subcellular location is the cell inner membrane. It carries out the reaction a quinone + NADH + 5 H(+)(in) = a quinol + NAD(+) + 4 H(+)(out). Functionally, NDH-1 shuttles electrons from NADH, via FMN and iron-sulfur (Fe-S) centers, to quinones in the respiratory chain. The immediate electron acceptor for the enzyme in this species is believed to be ubiquinone. Couples the redox reaction to proton translocation (for every two electrons transferred, four hydrogen ions are translocated across the cytoplasmic membrane), and thus conserves the redox energy in a proton gradient. This subunit may bind ubiquinone. This chain is NADH-quinone oxidoreductase subunit H, found in Hydrogenovibrio crunogenus (strain DSM 25203 / XCL-2) (Thiomicrospira crunogena).